We begin with the raw amino-acid sequence, 104 residues long: Protein S100-A14 (104 aa).

Residues 27–61 (KNFHQYSVEGGKETLTPSELRDLVTQQLPHLMPSN) enclose the EF-hand domain.

The protein belongs to the S-100 family. Homodimer. Interacts with AGER.

The protein resides in the cytoplasm. Functionally, modulates P53/TP53 protein levels, and thereby plays a role in the regulation of cell survival and apoptosis. Depending on the context, it can promote cell proliferation or apoptosis. Plays a role in the regulation of cell migration by modulating the levels of MMP2, a matrix protease that is under transcriptional control of P53/TP53. Does not bind calcium. This is Protein S100-A14 (S100A14) from Bos taurus (Bovine).